A 267-amino-acid chain; its full sequence is tRNA pseudouridine synthase A (267 aa).

The active-site Nucleophile is aspartate 53. Tyrosine 114 is a binding site for substrate.

Belongs to the tRNA pseudouridine synthase TruA family. As to quaternary structure, homodimer.

The enzyme catalyses uridine(38/39/40) in tRNA = pseudouridine(38/39/40) in tRNA. Functionally, formation of pseudouridine at positions 38, 39 and 40 in the anticodon stem and loop of transfer RNAs. The protein is tRNA pseudouridine synthase A of Chlamydia trachomatis serovar A (strain ATCC VR-571B / DSM 19440 / HAR-13).